Here is a 607-residue protein sequence, read N- to C-terminus: Proteasome-associated ATPase (607 aa).

A compositionally biased stretch (basic and acidic residues) spans 1 to 17; that stretch reads MTESDRHDTPKGDRRIS. Residues 1–65 form a disordered region; it reads MTESDRHDTP…GRPAADNKEL (65 aa). The stretch at 59 to 102 forms a coiled coil; it reads AADNKELQERVDNLTARNAKLLDTLKDARQQLVALREEVDRLGQ. 294-299 contributes to the ATP binding site; sequence GCGKTL. The interval 606–607 is docks into pockets in the proteasome alpha-ring; the sequence is YL.

Belongs to the AAA ATPase family. In terms of assembly, homohexamer. Assembles into a hexameric ring structure that caps the 20S proteasome core. Strongly interacts with the prokaryotic ubiquitin-like protein Pup through a hydrophobic interface; the interacting region of ARC lies in its N-terminal coiled-coil domain. There is one Pup binding site per ARC hexamer ring. Upon ATP-binding, the C-terminus of ARC interacts with the alpha-rings of the proteasome core, possibly by binding to the intersubunit pockets.

It participates in protein degradation; proteasomal Pup-dependent pathway. In terms of biological role, ATPase which is responsible for recognizing, binding, unfolding and translocation of pupylated proteins into the bacterial 20S proteasome core particle. May be essential for opening the gate of the 20S proteasome via an interaction with its C-terminus, thereby allowing substrate entry and access to the site of proteolysis. Thus, the C-termini of the proteasomal ATPase may function like a 'key in a lock' to induce gate opening and therefore regulate proteolysis. This chain is Proteasome-associated ATPase, found in Gordonia bronchialis (strain ATCC 25592 / DSM 43247 / BCRC 13721 / JCM 3198 / KCTC 3076 / NBRC 16047 / NCTC 10667) (Rhodococcus bronchialis).